The following is a 128-amino-acid chain: Protein 2B* (128 aa).

Disordered stretches follow at residues 1–27 (PFMFRPRKQVFPDPRSGSVINGSNPTA) and 92–128 (RDDNSSDASGPFDSALLRNIDGRRDYKPDKSVRRNSS). A compositionally biased stretch (polar residues) spans 18–27 (SVINGSNPTA). Positions 111–128 (IDGRRDYKPDKSVRRNSS) are enriched in basic and acidic residues.

Belongs to the encephalomyocarditis virus protein 2B* family.

This Aotus trivirgatus (Three-striped night monkey) protein is Protein 2B*.